Here is a 388-residue protein sequence, read N- to C-terminus: Chorismate synthase (388 aa).

R39 and R45 together coordinate NADP(+). Residues 132–134, 251–252, G296, 311–315, and R337 each bind FMN; these read RSS, NA, and KPIPT.

The protein belongs to the chorismate synthase family. As to quaternary structure, homotetramer. It depends on FMNH2 as a cofactor.

The catalysed reaction is 5-O-(1-carboxyvinyl)-3-phosphoshikimate = chorismate + phosphate. The protein operates within metabolic intermediate biosynthesis; chorismate biosynthesis; chorismate from D-erythrose 4-phosphate and phosphoenolpyruvate: step 7/7. In terms of biological role, catalyzes the anti-1,4-elimination of the C-3 phosphate and the C-6 proR hydrogen from 5-enolpyruvylshikimate-3-phosphate (EPSP) to yield chorismate, which is the branch point compound that serves as the starting substrate for the three terminal pathways of aromatic amino acid biosynthesis. This reaction introduces a second double bond into the aromatic ring system. This chain is Chorismate synthase, found in Staphylococcus epidermidis (strain ATCC 35984 / DSM 28319 / BCRC 17069 / CCUG 31568 / BM 3577 / RP62A).